The following is a 342-amino-acid chain: Dihydroorotase (342 aa).

Positions 13 and 15 each coordinate Zn(2+). Substrate is bound by residues H15–R17 and N41. Residues K98, H135, and H173 each coordinate Zn(2+). K98 is modified (N6-carboxylysine). H135 is a binding site for substrate. L218 is a substrate binding site. D246 serves as a coordination point for Zn(2+). Residue D246 is part of the active site. H250 and A262 together coordinate substrate.

Belongs to the metallo-dependent hydrolases superfamily. DHOase family. Class II DHOase subfamily. As to quaternary structure, homodimer. Requires Zn(2+) as cofactor.

The enzyme catalyses (S)-dihydroorotate + H2O = N-carbamoyl-L-aspartate + H(+). It functions in the pathway pyrimidine metabolism; UMP biosynthesis via de novo pathway; (S)-dihydroorotate from bicarbonate: step 3/3. Catalyzes the reversible cyclization of carbamoyl aspartate to dihydroorotate. The protein is Dihydroorotase of Aliivibrio fischeri (strain MJ11) (Vibrio fischeri).